Consider the following 273-residue polypeptide: MKSTFVRSLFSNLEHMNQDSSTICKFGDCYKLKTLIYPFMSGRKTEKIFTCQDVKKISKGEYGNRLIKIIPKKYIISTNNMRNVEVASEAYYNFVANDIEGIHQLVDYLESANHVFFVYHISRGRTITLQKLIETKYGMKIGPQKDYGTTVLNIFKTVVISSIEMYNHGIFHHKLNSSNILINMNTFSPSITNFNYASFVKDEDWKTIVKNLGILLYELWIGHRPDDNDYDEIKIILNHEDSEIHTGIKNFILTTLTKFVSKNEFNILIENLP.

This is an uncharacterized protein from Acheta domesticus (House cricket).